Reading from the N-terminus, the 755-residue chain is SWI/SNF-related matrix-associated actin-dependent regulator of chromatin subfamily A-like protein 1 (755 aa).

Residues 7–27 (SEIAEKKRIALAKLQAKKSQL) are a coiled coil. Disordered stretches follow at residues 26–91 (QLLA…NKSS) and 104–134 (SNRELSRGAAHPYQRPNGGNERNKPTLSLSS). Polar residues predominate over residues 32 to 63 (PATNGKSTTSATGATQHANNGKSNPNQPQAKS). S63 carries the phosphoserine modification. One can recognise an HARP domain in the interval 139 to 217 (PVAVLLGNSI…KPYVHMNGIP (79 aa)). A Helicase ATP-binding domain is found at 256–412 (CFAIAQKGRI…FTQLQMIDGK (157 aa)). ATP is bound at residue 269–276 (DEMGLGKT). Residues 361-364 (DESH) carry the DESH box motif. Residues 527-681 (YLKTLVKEQK…NLQKATHTAA (155 aa)) enclose the Helicase C-terminal domain.

Belongs to the SNF2/RAD54 helicase family. SMARCAL1 subfamily.

Its subcellular location is the nucleus. Functionally, ATP-dependent annealing helicase that catalyzes the rewinding of the stably unwound DNA. This chain is SWI/SNF-related matrix-associated actin-dependent regulator of chromatin subfamily A-like protein 1 (Marcal1), found in Drosophila melanogaster (Fruit fly).